Consider the following 131-residue polypeptide: Fatty acid-binding protein (131 aa).

(5Z,8Z,11Z,14Z)-eicosatetraenoate-binding positions include R106 and R126–Y128. Residues R106 and R126–Y128 contribute to the (9Z)-octadecenoate site.

This sequence belongs to the calycin superfamily. Fatty-acid binding protein (FABP) family.

Its subcellular location is the cytoplasm. Functionally, FABPs are thought to play a role in the intracellular transport of long-chain fatty acids and their acyl-CoA esters. The sequence is that of Fatty acid-binding protein from Tyrophagus putrescentiae (Mold mite).